Reading from the N-terminus, the 73-residue chain is ATP synthase subunit 9, mitochondrial (73 aa).

2 helical membrane passes run 12–32 (VAAL…AALI) and 50–70 (ILGF…SFLL).

This sequence belongs to the ATPase C chain family. As to quaternary structure, F-type ATPases have 2 components, CF(1) - the catalytic core - and CF(0) - the membrane proton channel. CF(1) has five subunits: alpha(3), beta(3), gamma(1), delta(1), epsilon(1). CF(0) has three main subunits: a, b and c.

The protein resides in the mitochondrion inner membrane. Its function is as follows. Mitochondrial membrane ATP synthase (F(1)F(0) ATP synthase or Complex V) produces ATP from ADP in the presence of a proton gradient across the membrane which is generated by electron transport complexes of the respiratory chain. F-type ATPases consist of two structural domains, F(1) - containing the extramembraneous catalytic core and F(0) - containing the membrane proton channel, linked together by a central stalk and a peripheral stalk. During catalysis, ATP synthesis in the catalytic domain of F(1) is coupled via a rotary mechanism of the central stalk subunits to proton translocation. Part of the complex F(0) domain. A homomeric c-ring of probably 10 subunits is part of the complex rotary element. The polypeptide is ATP synthase subunit 9, mitochondrial (ATP9) (Mycosarcoma maydis (Corn smut fungus)).